Consider the following 367-residue polypeptide: Protein-glutamate methylesterase/protein-glutamine glutaminase 2 (367 aa).

The Response regulatory domain occupies 3–120; it reads SVVVVDDSAF…SLDIVRIEND (118 aa). Asp54 carries the 4-aspartylphosphate modification. Residues 132–174 form a disordered region; it reads RMLRTPRPVRPAPTASAPAQTAQVASAAPATAPSRPAMPATRA. A compositionally biased stretch (low complexity) spans 143-174; the sequence is APTASAPAQTAQVASAAPATAPSRPAMPATRA. Residues 175-367 enclose the CheB-type methylesterase domain; sequence SRPVRDVVAI…AAAIMNGLYK (193 aa). Active-site residues include Ser187, His214, and Asp310.

The protein belongs to the CheB family. Post-translationally, phosphorylated by CheA. Phosphorylation of the N-terminal regulatory domain activates the methylesterase activity.

The protein resides in the cytoplasm. It catalyses the reaction [protein]-L-glutamate 5-O-methyl ester + H2O = L-glutamyl-[protein] + methanol + H(+). The catalysed reaction is L-glutaminyl-[protein] + H2O = L-glutamyl-[protein] + NH4(+). In terms of biological role, involved in chemotaxis. Part of a chemotaxis signal transduction system that modulates chemotaxis in response to various stimuli. Catalyzes the demethylation of specific methylglutamate residues introduced into the chemoreceptors (methyl-accepting chemotaxis proteins or MCP) by CheR. Also mediates the irreversible deamidation of specific glutamine residues to glutamic acid. The chain is Protein-glutamate methylesterase/protein-glutamine glutaminase 2 from Nitratidesulfovibrio vulgaris (strain ATCC 29579 / DSM 644 / CCUG 34227 / NCIMB 8303 / VKM B-1760 / Hildenborough) (Desulfovibrio vulgaris).